A 75-amino-acid polypeptide reads, in one-letter code: ATP synthase subunit c (75 aa).

2 consecutive transmembrane segments (helical) span residues 8 to 28 and 52 to 72; these read FIAI…IANI and IGAA…MLLI.

This sequence belongs to the ATPase C chain family. As to quaternary structure, F-type ATPases have 2 components, F(1) - the catalytic core - and F(0) - the membrane proton channel. F(1) has five subunits: alpha(3), beta(3), gamma(1), delta(1), epsilon(1). F(0) has three main subunits: a(1), b(2) and c(10-14). The alpha and beta chains form an alternating ring which encloses part of the gamma chain. F(1) is attached to F(0) by a central stalk formed by the gamma and epsilon chains, while a peripheral stalk is formed by the delta and b chains.

It is found in the cell membrane. Functionally, f(1)F(0) ATP synthase produces ATP from ADP in the presence of a proton or sodium gradient. F-type ATPases consist of two structural domains, F(1) containing the extramembraneous catalytic core and F(0) containing the membrane proton channel, linked together by a central stalk and a peripheral stalk. During catalysis, ATP synthesis in the catalytic domain of F(1) is coupled via a rotary mechanism of the central stalk subunits to proton translocation. Key component of the F(0) channel; it plays a direct role in translocation across the membrane. A homomeric c-ring of between 10-14 subunits forms the central stalk rotor element with the F(1) delta and epsilon subunits. The sequence is that of ATP synthase subunit c from Wolbachia pipientis wMel.